We begin with the raw amino-acid sequence, 312 residues long: Tetraacyldisaccharide 4'-kinase (312 aa).

Position 60-67 (60-67 (IAGGSGKT)) interacts with ATP.

It belongs to the LpxK family.

The enzyme catalyses a lipid A disaccharide + ATP = a lipid IVA + ADP + H(+). It participates in glycolipid biosynthesis; lipid IV(A) biosynthesis; lipid IV(A) from (3R)-3-hydroxytetradecanoyl-[acyl-carrier-protein] and UDP-N-acetyl-alpha-D-glucosamine: step 6/6. Its function is as follows. Transfers the gamma-phosphate of ATP to the 4'-position of a tetraacyldisaccharide 1-phosphate intermediate (termed DS-1-P) to form tetraacyldisaccharide 1,4'-bis-phosphate (lipid IVA). The chain is Tetraacyldisaccharide 4'-kinase from Helicobacter pylori (strain ATCC 700392 / 26695) (Campylobacter pylori).